The sequence spans 367 residues: Apolipoprotein A-V (367 aa).

Residues 1-20 form the signal peptide; the sequence is MVAVLTWALALLSAFATVQT. At S56 the chain carries Phosphoserine. Residues 71–90 form a disordered region; the sequence is LGPLSGQGREPPGLPHDPEG.

It belongs to the apolipoprotein A1/A4/E family. Interacts with GPIHBP1. Interacts with SORL1; this interaction leads to APOA5 internalization and sorting either to lysosomes and degradation, or to the trans-Golgi network. In terms of processing, phosphorylated by FAM20C in the extracellular medium.

It localises to the secreted. The protein resides in the early endosome. Its subcellular location is the late endosome. It is found in the golgi apparatus. The protein localises to the trans-Golgi network. Its function is as follows. Minor apolipoprotein mainly associated with HDL and to a lesser extent with VLDL. May also be associated with chylomicrons. Important determinant of plasma triglyceride (TG) levels by both being a potent stimulator of apo-CII lipoprotein lipase (LPL) TG hydrolysis and an inhibitor of the hepatic VLDL-TG production rate (without affecting the VLDL-apoB production rate). Activates poorly lecithin:cholesterol acyltransferase (LCAT) and does not enhance efflux of cholesterol from macrophages. Binds heparin. In Leptonychotes weddellii (Weddell seal), this protein is Apolipoprotein A-V (APOA5).